A 267-amino-acid chain; its full sequence is L-aspartate dehydrogenase (267 aa).

NAD(+) is bound by residues A124 and N190. Residue H220 is part of the active site.

The protein belongs to the L-aspartate dehydrogenase family.

It carries out the reaction L-aspartate + NADP(+) + H2O = oxaloacetate + NH4(+) + NADPH + H(+). The enzyme catalyses L-aspartate + NAD(+) + H2O = oxaloacetate + NH4(+) + NADH + H(+). It functions in the pathway cofactor biosynthesis; NAD(+) biosynthesis; iminoaspartate from L-aspartate (dehydrogenase route): step 1/1. In terms of biological role, specifically catalyzes the NAD or NADP-dependent dehydrogenation of L-aspartate to iminoaspartate. The chain is L-aspartate dehydrogenase from Polaromonas sp. (strain JS666 / ATCC BAA-500).